Reading from the N-terminus, the 320-residue chain is Glutathione synthetase (320 aa).

The ATP-grasp domain maps to 130–315; that stretch reads KIFISWFSRF…ITGILIDYIE (186 aa). 156–212 provides a ligand contact to ATP; the sequence is WKEKNDIILKPLDAMGGKGVFRIKKDDPNFSVIVETLTNYEKKYCMIQTYLPEVQFG. 2 residues coordinate Mg(2+): Glu286 and Asn288.

Belongs to the prokaryotic GSH synthase family. Mg(2+) is required as a cofactor. Mn(2+) serves as cofactor.

It carries out the reaction gamma-L-glutamyl-L-cysteine + glycine + ATP = glutathione + ADP + phosphate + H(+). It functions in the pathway sulfur metabolism; glutathione biosynthesis; glutathione from L-cysteine and L-glutamate: step 2/2. This Buchnera aphidicola subsp. Schizaphis graminum (strain Sg) protein is Glutathione synthetase.